A 340-amino-acid chain; its full sequence is Farnesyl pyrophosphate synthase 1 (340 aa).

Lys-47, Arg-50, and Gln-85 together coordinate isopentenyl diphosphate. The Mg(2+) site is built by Asp-92 and Asp-96. Arg-101 serves as a coordination point for dimethylallyl diphosphate. Arg-102 serves as a coordination point for isopentenyl diphosphate. Residues Lys-188, Thr-189, Gln-227, Lys-244, and Lys-253 each contribute to the dimethylallyl diphosphate site.

The protein belongs to the FPP/GGPP synthase family. Mg(2+) is required as a cofactor. Mainly expressed in trichomes and flowers, and, to a lower extent, in leaves, roots and stems.

It localises to the cytoplasm. The protein resides in the nucleus. The enzyme catalyses isopentenyl diphosphate + dimethylallyl diphosphate = (2E)-geranyl diphosphate + diphosphate. The catalysed reaction is isopentenyl diphosphate + (2E)-geranyl diphosphate = (2E,6E)-farnesyl diphosphate + diphosphate. Its pathway is isoprenoid biosynthesis; farnesyl diphosphate biosynthesis; farnesyl diphosphate from geranyl diphosphate and isopentenyl diphosphate: step 1/1. It functions in the pathway sesquiterpene biosynthesis. It participates in isoprenoid biosynthesis; geranyl diphosphate biosynthesis; geranyl diphosphate from dimethylallyl diphosphate and isopentenyl diphosphate: step 1/1. Catalyzes the sequential condensation of isopentenyl pyrophosphate with the allylic pyrophosphates, dimethylallyl pyrophosphate, and then with the resultant geranylpyrophosphate to the ultimate product farnesyl pyrophosphate. The sequence is that of Farnesyl pyrophosphate synthase 1 from Cannabis sativa (Hemp).